The following is a 276-amino-acid chain: ATP synthase subunit a (276 aa).

Helical transmembrane passes span 47-67 (WHIDSLLFSVGLGVLFLWLFY), 107-127 (IAPLGLTIFVWVFLMNLMDLI), 152-172 (DLNVTLGLALSVFVLIVFYSI), 188-208 (PFNHWALIPINFVLETVTLIA), 226-246 (LIFILIALMPWWAQFALSVPW), and 247-267 (AIFHILVIVLQAFIFMMLTIV).

It belongs to the ATPase A chain family. In terms of assembly, F-type ATPases have 2 components, CF(1) - the catalytic core - and CF(0) - the membrane proton channel. CF(1) has five subunits: alpha(3), beta(3), gamma(1), delta(1), epsilon(1). CF(0) has three main subunits: a(1), b(2) and c(9-12). The alpha and beta chains form an alternating ring which encloses part of the gamma chain. CF(1) is attached to CF(0) by a central stalk formed by the gamma and epsilon chains, while a peripheral stalk is formed by the delta and b chains.

It is found in the cell inner membrane. Its function is as follows. Key component of the proton channel; it plays a direct role in the translocation of protons across the membrane. In Shewanella halifaxensis (strain HAW-EB4), this protein is ATP synthase subunit a.